Consider the following 110-residue polypeptide: Thioredoxin (110 aa).

Positions 3–108 (KPIEVHDSDF…YREIFDKVLA (106 aa)) constitute a Thioredoxin domain. An intrachain disulfide couples C32 to C35. K105 carries the N6,N6-dimethyllysine; alternate modification. K105 carries the post-translational modification N6-methyllysine; alternate.

Functionally, participates in various redox reactions through the reversible oxidation of its active center dithiol to a disulfide and catalyzes dithiol-disulfide exchange reactions. The protein is Thioredoxin (trxA) of Chloroflexus aurantiacus (strain ATCC 29366 / DSM 635 / J-10-fl).